A 267-amino-acid polypeptide reads, in one-letter code: Proteasome subunit alpha (267 aa).

Residues Glu-231–Asp-267 are disordered. Basic and acidic residues-rich tracts occupy residues Leu-234–Ala-243 and Glu-252–Asp-267.

It belongs to the peptidase T1A family. The 20S proteasome core is composed of 14 alpha and 14 beta subunits that assemble into four stacked heptameric rings, resulting in a barrel-shaped structure. The two inner rings, each composed of seven catalytic beta subunits, are sandwiched by two outer rings, each composed of seven alpha subunits. The catalytic chamber with the active sites is on the inside of the barrel. Has a gated structure, the ends of the cylinder being occluded by the N-termini of the alpha-subunits. Is capped by the proteasome-associated ATPase, ARC.

The protein resides in the cytoplasm. It functions in the pathway protein degradation; proteasomal Pup-dependent pathway. The formation of the proteasomal ATPase ARC-20S proteasome complex, likely via the docking of the C-termini of ARC into the intersubunit pockets in the alpha-rings, may trigger opening of the gate for substrate entry. Interconversion between the open-gate and close-gate conformations leads to a dynamic regulation of the 20S proteasome proteolysis activity. Functionally, component of the proteasome core, a large protease complex with broad specificity involved in protein degradation. This Mycobacterium ulcerans (strain Agy99) protein is Proteasome subunit alpha.